Consider the following 262-residue polypeptide: Type III pantothenate kinase (262 aa).

10 to 17 provides a ligand contact to ATP; the sequence is DIGNTTTV. Substrate is bound at residue 110–113; that stretch reads GADR. Residue aspartate 112 is the Proton acceptor of the active site. Aspartate 134 is a K(+) binding site. Threonine 137 provides a ligand contact to ATP. Residue threonine 189 coordinates substrate.

It belongs to the type III pantothenate kinase family. In terms of assembly, homodimer. It depends on NH4(+) as a cofactor. The cofactor is K(+).

The protein resides in the cytoplasm. It carries out the reaction (R)-pantothenate + ATP = (R)-4'-phosphopantothenate + ADP + H(+). It functions in the pathway cofactor biosynthesis; coenzyme A biosynthesis; CoA from (R)-pantothenate: step 1/5. Functionally, catalyzes the phosphorylation of pantothenate (Pan), the first step in CoA biosynthesis. This Deinococcus radiodurans (strain ATCC 13939 / DSM 20539 / JCM 16871 / CCUG 27074 / LMG 4051 / NBRC 15346 / NCIMB 9279 / VKM B-1422 / R1) protein is Type III pantothenate kinase.